The primary structure comprises 298 residues: Glutamyl-Q tRNA(Asp) synthetase (298 aa).

Residues 9 to 13 (RFAPS) and Glu-45 contribute to the L-glutamate site. Positions 12 to 22 (PSPSGELHFGS) match the 'HIGH' region motif. Cys-101, Cys-103, Tyr-115, and Cys-119 together coordinate Zn(2+). L-glutamate contacts are provided by Tyr-172 and Arg-190. The 'KMSKS' region signature appears at 228 to 232 (KLSKQ). Lys-231 is a binding site for ATP.

This sequence belongs to the class-I aminoacyl-tRNA synthetase family. GluQ subfamily. Zn(2+) serves as cofactor.

In terms of biological role, catalyzes the tRNA-independent activation of glutamate in presence of ATP and the subsequent transfer of glutamate onto a tRNA(Asp). Glutamate is transferred on the 2-amino-5-(4,5-dihydroxy-2-cyclopenten-1-yl) moiety of the queuosine in the wobble position of the QUC anticodon. The chain is Glutamyl-Q tRNA(Asp) synthetase from Cronobacter sakazakii (strain ATCC BAA-894) (Enterobacter sakazakii).